Reading from the N-terminus, the 124-residue chain is Large ribosomal subunit protein uL18 (124 aa).

The protein belongs to the universal ribosomal protein uL18 family. As to quaternary structure, part of the 50S ribosomal subunit; part of the 5S rRNA/L5/L18/L25 subcomplex. Contacts the 5S and 23S rRNAs.

Its function is as follows. This is one of the proteins that bind and probably mediate the attachment of the 5S RNA into the large ribosomal subunit, where it forms part of the central protuberance. In Orientia tsutsugamushi (strain Ikeda) (Rickettsia tsutsugamushi), this protein is Large ribosomal subunit protein uL18.